The following is a 1075-amino-acid chain: Flocculation protein FLO5 (1075 aa).

Residues 1 to 24 (MTIAHHCIFLVILAFLALINVASG) form the signal peptide. The region spanning 74–249 (GGQTDISIDY…GTTVSDNFEG (176 aa)) is the PA14 domain. Residues N135, N187, N203, and N262 are each glycosylated (N-linked (GlcNAc...) asparagine). The segment at 197–240 (DGSLPDNITGTVYMYAGYYYPLKVVYSNAVSWGTLPISVELPDG) is sugar recognition. 8 tandem repeats follow at residues 278 to 322 (TTTE…STIT), 323 to 367 (TTTE…GLIT), 368 to 412 (TTTE…GLIT), 413 to 457 (TTTE…GLIT), 458 to 502 (TTTE…GLIS), 503 to 547 (TTTE…GLIT), 548 to 592 (TTTE…GLIT), and 593 to 637 (RTTE…ISSS). Residues 278 to 637 (TTTEPWTGTF…RTPTTAISSS (360 aa)) are 8 X 45 AA approximate tandem repeats, Thr-rich. Low complexity-rich tracts occupy residues 322 to 345 (TTTT…VTGT), 367 to 390 (TTTT…VTGT), 457 to 480 (TTTT…VTGT), and 547 to 570 (TTTT…VTGT). 4 disordered regions span residues 322–349 (TTTT…NGQP), 366–394 (ITTT…NGQP), 456–484 (ITTT…NGQP), and 546–574 (ITTT…NGQP). N-linked (GlcNAc...) asparagine glycosylation occurs at N663. Repeat copies occupy residues 667-686 (VISS…TSSS) and 687-706 (FISS…IFSE). The tract at residues 667-706 (VISSSVISSSVTSSLVTSSSFISSSVISSSTTTSTSIFSE) is 2 X 20 AA approximate tandem repeats, Ser-rich. A compositionally biased stretch (low complexity) spans 702–762 (SIFSESSTSS…SLPPVTSATT (61 aa)). A disordered region spans residues 702–781 (SIFSESSTSS…PATTTKTSEQ (80 aa)). N-linked (GlcNAc...) asparagine glycosylation is present at N749. The segment covering 763-781 (GQETASSLPPATTTKTSEQ) has biased composition (polar residues). 3 consecutive repeat copies span residues 775–825 (TTKT…CPIS), 847–897 (TTET…CPIS), and 898–948 (TTES…RPQT). Residues 775 to 948 (TTKTSEQTTL…TVYPTWRPQT (174 aa)) are 3 X 51 AA approximate repeats, Ser/Thr-rich. Residues 948 to 958 (TTNEQSVSSKM) are compositionally biased toward polar residues. Disordered regions lie at residues 948 to 980 (TTNE…AVTS) and 1016 to 1038 (SLTS…SSMV). Composition is skewed to low complexity over residues 959 to 977 (NSAT…TKTA) and 1016 to 1026 (SLTSSGLSTMS). Polar residues predominate over residues 1027 to 1038 (QQPRSTPASSMV). G1052 is lipidated: GPI-anchor amidated glycine. Positions 1053–1075 (SANSLLAGSGLSVFIASLLLAII) are cleaved as a propeptide — removed in mature form.

Belongs to the flocculin family. Post-translationally, extensively O-glycosylated. The GPI-anchor is attached to the protein in the endoplasmic reticulum and serves to target the protein to the cell surface. There, the glucosamine-inositol phospholipid moiety is cleaved off and the GPI-modified mannoprotein is covalently attached via its lipidless GPI glycan remnant to the 1,6-beta-glucan of the outer cell wall layer.

It is found in the secreted. The protein localises to the cell wall. Its subcellular location is the membrane. Its function is as follows. Cell wall protein that participates directly in adhesive cell-cell interactions during yeast flocculation, a reversible, asexual and Ca(2+)-dependent process in which cells adhere to form aggregates (flocs) consisting of thousands of cells. The lectin-like protein sticks out of the cell wall of flocculent cells and selectively binds mannose residues in the cell walls of adjacent cells. Activity is inhibited by mannose, but not by glucose, maltose, sucrose or galactose. This Saccharomyces cerevisiae (strain ATCC 204508 / S288c) (Baker's yeast) protein is Flocculation protein FLO5 (FLO5).